The sequence spans 88 residues: UPF0335 protein MexAM1_META1p2947 (88 aa).

This sequence belongs to the UPF0335 family.

This chain is UPF0335 protein MexAM1_META1p2947, found in Methylorubrum extorquens (strain ATCC 14718 / DSM 1338 / JCM 2805 / NCIMB 9133 / AM1) (Methylobacterium extorquens).